A 254-amino-acid chain; its full sequence is tRNA (guanine-N(1)-)-methyltransferase (254 aa).

Residues G112 and 131 to 136 (IGDFIL) contribute to the S-adenosyl-L-methionine site.

The protein belongs to the RNA methyltransferase TrmD family. Homodimer.

Its subcellular location is the cytoplasm. It carries out the reaction guanosine(37) in tRNA + S-adenosyl-L-methionine = N(1)-methylguanosine(37) in tRNA + S-adenosyl-L-homocysteine + H(+). Its function is as follows. Specifically methylates guanosine-37 in various tRNAs. The protein is tRNA (guanine-N(1)-)-methyltransferase of Persephonella marina (strain DSM 14350 / EX-H1).